We begin with the raw amino-acid sequence, 62 residues long: Large ribosomal subunit protein eL37 (62 aa).

Residues cysteine 20, cysteine 23, cysteine 35, and cysteine 38 each coordinate Zn(2+). Residues 20–38 (CRRCGRRAYHVRKGYCAAC) form a C4-type zinc finger.

The protein belongs to the eukaryotic ribosomal protein eL37 family. Zn(2+) is required as a cofactor.

Functionally, binds to the 23S rRNA. This Methanopyrus kandleri (strain AV19 / DSM 6324 / JCM 9639 / NBRC 100938) protein is Large ribosomal subunit protein eL37.